A 295-amino-acid polypeptide reads, in one-letter code: MSSSRPVFRSRWLPYLLVAPQLIITVIFFIWPAGEALWYSLQSVDPFGFSSRFVGLDNFVALFHDSYYIDSFWTTIKFSTFVTVSGLLVSLFFAALVEYIVRGSRFYQTLMLLPYAVAPAVAAVLWIFLFNPGRGLITHFLAEFGYDWNHAQNSGQAMFLVVFASVWKQISYNFLFFYAALQSIPRSLIEAAAIDGAGPIRRFFKIALPLIAPVSFFLLVVNLVYAFFDTFPVIDAATSGGPVQATTTLIYKIYREGFTGLDLASSAAQSVVLMFLVIVLTVMQFRYVESKVRYQ.

Over 1–11 (MSSSRPVFRSR) the chain is Cytoplasmic. Residues 12–32 (WLPYLLVAPQLIITVIFFIWP) traverse the membrane as a helical segment. The Periplasmic portion of the chain corresponds to 33-80 (AGEALWYSLQSVDPFGFSSRFVGLDNFVALFHDSYYIDSFWTTIKFST). In terms of domain architecture, ABC transmembrane type-1 spans 76 to 284 (IKFSTFVTVS…FLVIVLTVMQ (209 aa)). A helical membrane pass occupies residues 81–101 (FVTVSGLLVSLFFAALVEYIV). Residues 102–109 (RGSRFYQT) are Cytoplasmic-facing. The helical transmembrane segment at 110–130 (LMLLPYAVAPAVAAVLWIFLF) threads the bilayer. The Periplasmic segment spans residues 131–156 (NPGRGLITHFLAEFGYDWNHAQNSGQ). Residues 157–177 (AMFLVVFASVWKQISYNFLFF) traverse the membrane as a helical segment. Over 178-207 (YAALQSIPRSLIEAAAIDGAGPIRRFFKIA) the chain is Cytoplasmic. The chain crosses the membrane as a helical span at residues 208-228 (LPLIAPVSFFLLVVNLVYAFF). Over 229–262 (DTFPVIDAATSGGPVQATTTLIYKIYREGFTGLD) the chain is Periplasmic. Residues 263 to 283 (LASSAAQSVVLMFLVIVLTVM) form a helical membrane-spanning segment. Topologically, residues 284-295 (QFRYVESKVRYQ) are cytoplasmic.

The protein belongs to the binding-protein-dependent transport system permease family. UgpAE subfamily. In terms of assembly, the complex is composed of two ATP-binding proteins (UgpC), two transmembrane proteins (UgpA and UgpE) and a solute-binding protein (UgpB).

The protein localises to the cell inner membrane. Its function is as follows. Part of the ABC transporter complex UgpBAEC involved in sn-glycerol-3-phosphate (G3P) import. Probably responsible for the translocation of the substrate across the membrane. This chain is sn-glycerol-3-phosphate transport system permease protein UgpA (ugpA), found in Escherichia coli O157:H7.